Here is a 96-residue protein sequence, read N- to C-terminus: Uteroglobin (96 aa).

Positions 1 to 19 (MKIAITITVLMLSICCSSA) are cleaved as a signal peptide.

The protein belongs to the secretoglobin family. In terms of assembly, antiparallel homodimer; disulfide-linked. Interaction with LMBR1L is controversial. In terms of tissue distribution, club cells (nonciliated cells of the surface epithelium of the pulmonary airways).

Its subcellular location is the secreted. Functionally, binds phosphatidylcholine, phosphatidylinositol, polychlorinated biphenyls (PCB) and weakly progesterone, potent inhibitor of phospholipase A2. The polypeptide is Uteroglobin (Scgb1a1) (Rattus norvegicus (Rat)).